The following is a 52-amino-acid chain: ATP synthase F(1) complex subunit epsilon, mitochondrial (52 aa).

Residues K21, K32, and K37 each carry the N6-acetyllysine; alternate modification. N6-succinyllysine; alternate is present on residues K21, K32, and K37. K44 is subject to N6-acetyllysine.

It belongs to the eukaryotic ATPase epsilon family. In terms of assembly, component of the ATP synthase complex composed at least of ATP5F1A/subunit alpha, ATP5F1B/subunit beta, ATP5MC1/subunit c (homooctomer), MT-ATP6/subunit a, MT-ATP8/subunit 8, ATP5ME/subunit e, ATP5MF/subunit f, ATP5MG/subunit g, ATP5MK/subunit k, ATP5MJ/subunit j, ATP5F1C/subunit gamma, ATP5F1D/subunit delta, ATP5F1E/subunit epsilon, ATP5PF/subunit F6, ATP5PB/subunit b, ATP5PD/subunit d, ATP5PO/subunit OSCP. ATP synthase complex consists of a soluble F(1) head domain (subunits alpha(3) and beta(3)) - the catalytic core - and a membrane F(0) domain - the membrane proton channel (subunits c, a, 8, e, f, g, k and j). These two domains are linked by a central stalk (subunits gamma, delta, and epsilon) rotating inside the F1 region and a stationary peripheral stalk (subunits F6, b, d, and OSCP).

It is found in the mitochondrion. It localises to the mitochondrion inner membrane. Subunit epsilon, of the mitochondrial membrane ATP synthase complex (F(1)F(0) ATP synthase or Complex V) that produces ATP from ADP in the presence of a proton gradient across the membrane which is generated by electron transport complexes of the respiratory chain. ATP synthase complex consist of a soluble F(1) head domain - the catalytic core - and a membrane F(1) domain - the membrane proton channel. These two domains are linked by a central stalk rotating inside the F(1) region and a stationary peripheral stalk. During catalysis, ATP synthesis in the catalytic domain of F(1) is coupled via a rotary mechanism of the central stalk subunits to proton translocation. In vivo, can only synthesize ATP although its ATP hydrolase activity can be activated artificially in vitro. May be essential for the assembly of F(1) and may play an important role in the incorporation of the hydrophobic subunit c into the F(1)-c oligomer rotor of the mitochondrial ATP synthase complex. The sequence is that of ATP synthase F(1) complex subunit epsilon, mitochondrial from Mus musculus (Mouse).